We begin with the raw amino-acid sequence, 178 residues long: Beta-lytic metalloendopeptidase (178 aa).

Cys-65 and Cys-111 form a disulfide bridge. Positions 120 and 122 each coordinate Zn(2+). A disulfide bond links Cys-155 and Cys-168.

Belongs to the peptidase M23A family. The cofactor is Zn(2+).

It catalyses the reaction Cleavage of N-acetylmuramoyl-|-Ala, and of the insulin B chain at 23-Gly-|-Phe-24 &gt; 18-Val-|-Cys(SO3H).. This chain is Beta-lytic metalloendopeptidase, found in Lysobacter enzymogenes.